Here is a 425-residue protein sequence, read N- to C-terminus: Elongation factor 1-alpha (425 aa).

One can recognise a tr-type G domain in the interval 5-221; that stretch reads KPHMNLAVIG…DTFKEPSKPT (217 aa). The segment at 14–21 is G1; that stretch reads GHIDHGKS. 14–21 contacts GTP; it reads GHIDHGKS. Serine 21 serves as a coordination point for Mg(2+). The G2 stretch occupies residues 70-74; it reads GITID. The G3 stretch occupies residues 91–94; that stretch reads DCPG. Residues 91 to 95 and 146 to 149 each bind GTP; these read DCPGH and NKMD. The segment at 146 to 149 is G4; sequence NKMD. A G5 region spans residues 185-187; it reads SSL.

This sequence belongs to the TRAFAC class translation factor GTPase superfamily. Classic translation factor GTPase family. EF-Tu/EF-1A subfamily.

It is found in the cytoplasm. The enzyme catalyses GTP + H2O = GDP + phosphate + H(+). Functionally, GTP hydrolase that promotes the GTP-dependent binding of aminoacyl-tRNA to the A-site of ribosomes during protein biosynthesis. The polypeptide is Elongation factor 1-alpha (Methanoregula boonei (strain DSM 21154 / JCM 14090 / 6A8)).